The following is a 130-amino-acid chain: Small ribosomal subunit protein uS8 (130 aa).

This sequence belongs to the universal ribosomal protein uS8 family. In terms of assembly, part of the 30S ribosomal subunit. Contacts proteins S5 and S12.

Functionally, one of the primary rRNA binding proteins, it binds directly to 16S rRNA central domain where it helps coordinate assembly of the platform of the 30S subunit. The polypeptide is Small ribosomal subunit protein uS8 (Cellvibrio japonicus (strain Ueda107) (Pseudomonas fluorescens subsp. cellulosa)).